The chain runs to 115 residues: Tyrosine-protein phosphatase 24 (115 aa).

Residues 1–115 (WMMIVEQKCR…ETGSDAPMVV (115 aa)) enclose the Tyrosine-protein phosphatase domain. Aspartate 83 provides a ligand contact to substrate.

The protein belongs to the protein-tyrosine phosphatase family.

The enzyme catalyses O-phospho-L-tyrosyl-[protein] + H2O = L-tyrosyl-[protein] + phosphate. This chain is Tyrosine-protein phosphatase 24 (STY-24), found in Styela plicata (Wrinkled sea squirt).